A 288-amino-acid polypeptide reads, in one-letter code: Bifunctional protein FolD 1 (288 aa).

Residues 170-172 (GPG) and I236 contribute to the NADP(+) site.

It belongs to the tetrahydrofolate dehydrogenase/cyclohydrolase family. In terms of assembly, homodimer.

The catalysed reaction is (6R)-5,10-methylene-5,6,7,8-tetrahydrofolate + NADP(+) = (6R)-5,10-methenyltetrahydrofolate + NADPH. The enzyme catalyses (6R)-5,10-methenyltetrahydrofolate + H2O = (6R)-10-formyltetrahydrofolate + H(+). It participates in one-carbon metabolism; tetrahydrofolate interconversion. Functionally, catalyzes the oxidation of 5,10-methylenetetrahydrofolate to 5,10-methenyltetrahydrofolate and then the hydrolysis of 5,10-methenyltetrahydrofolate to 10-formyltetrahydrofolate. The protein is Bifunctional protein FolD 1 of Deinococcus geothermalis (strain DSM 11300 / CIP 105573 / AG-3a).